Here is a 312-residue protein sequence, read N- to C-terminus: Testis-expressed protein 13B (312 aa).

The protein belongs to the TEX13 family. In terms of tissue distribution, testis specific.

The protein is Testis-expressed protein 13B (TEX13B) of Homo sapiens (Human).